The sequence spans 409 residues: NADH-quinone oxidoreductase subunit 4 (409 aa).

This sequence belongs to the complex I 49 kDa subunit family. As to quaternary structure, NDH-1 is composed of 15 different subunits, Nqo1 to Nqo15. The complex has a L-shaped structure, with the hydrophobic arm (subunits Nqo7, Nqo8 and Nqo10 to Nqo14) embedded in the membrane and the hydrophilic peripheral arm (subunits Nqo1 to Nqo6, Nqo9 and Nqo15) protruding into the bacterial cytoplasm. The hydrophilic domain contains all the redox centers. This subunit interacts extensively with Nqo6.

It is found in the cell membrane. The enzyme catalyses a quinone + NADH + 5 H(+)(in) = a quinol + NAD(+) + 4 H(+)(out). Its function is as follows. NDH-1 shuttles electrons from NADH, via FMN and iron-sulfur (Fe-S) centers, to quinones in the respiratory chain. The immediate electron acceptor for the enzyme in this species is menaquinone. Couples the redox reaction to proton translocation (for every two electrons transferred, four hydrogen ions are translocated across the cytoplasmic membrane), and thus conserves the redox energy in a proton gradient required for the synthesis of ATP. The Nqo4 subunit may contain the quinone-binding site. The chain is NADH-quinone oxidoreductase subunit 4 (nqo4) from Thermus thermophilus (strain ATCC 27634 / DSM 579 / HB8).